The sequence spans 523 residues: Histidine ammonia-lyase (523 aa).

Positions 148–150 (ASG) form a cross-link, 5-imidazolinone (Ala-Gly). Residue serine 149 is modified to 2,3-didehydroalanine (Ser).

It belongs to the PAL/histidase family. Contains an active site 4-methylidene-imidazol-5-one (MIO), which is formed autocatalytically by cyclization and dehydration of residues Ala-Ser-Gly.

Its subcellular location is the cytoplasm. It carries out the reaction L-histidine = trans-urocanate + NH4(+). Its pathway is amino-acid degradation; L-histidine degradation into L-glutamate; N-formimidoyl-L-glutamate from L-histidine: step 1/3. In Chloroflexus aurantiacus (strain ATCC 29366 / DSM 635 / J-10-fl), this protein is Histidine ammonia-lyase.